The primary structure comprises 612 residues: MEKVDTSGRLSKLRELMRAHSIDVYVVPSEDSHSSEYIAACDARREFISGFSGSAGCAVITLDKAALATDGRYFNQASKQLDHNWLLLKQGLQDVPTWQDWSAEQSAGGKIVAVDPELIAAAAAKKLAAKIHKFGGSELVALERNLVDVVWGKDRPDRPRNPVVILDTAFSGKNVETKLRDLRQELVKKDSLGMVVSMLDEVAWLLNLRGSDIPYNPVFFSYAVITLDTATLFVDDTKLHPDSLEYLRKNGIVTKPYSCIFDDVKALTSSKGVQGREKRTLLSSKASWALKRALGGDDLVEEVRSFIGDAKAVKNEAELAGMRACHIRDGIALIEYFAWLEDQLVAKRIVLDEVEAADKLEELRQKQENYVGLSFDTISSTGANAAVIHYKPERGSCPAIDPEAIYLCDSGAQYLDGTTDVTRTVHFGCPTAAEKLAYTLVLKGNIALDSAIFPKGTTGFALDCLARQHLWREGLDYRHGTGHGVGSYLNVHEGPIGIGTRVQFAEVSLASGNVVSIEPGFYEDGAFGIRIENLAIVREVQTQHSFGDKPYLGFEHVTMAPYCKNLIDISILTTAEKEWLNAHNTDIFNKTKDAFKDDALTLAWLTRETQPI.

D409, D420, E518, and E532 together coordinate Mn(2+).

The protein belongs to the peptidase M24B family. Requires Mn(2+) as cofactor.

It catalyses the reaction Release of any N-terminal amino acid, including proline, that is linked to proline, even from a dipeptide or tripeptide.. Its function is as follows. Catalyzes the removal of a penultimate prolyl residue from the N-termini of peptides. This is Probable Xaa-Pro aminopeptidase P (AMPP) from Verticillium alfalfae (strain VaMs.102 / ATCC MYA-4576 / FGSC 10136) (Verticillium wilt of alfalfa).